Reading from the N-terminus, the 309-residue chain is DDRGK domain-containing protein 1 (309 aa).

Topologically, residues Met-1 to Asp-2 are lumenal. A helical transmembrane segment spans residues Leu-3–Leu-23. Over Gln-24 to Ser-309 the chain is Cytoplasmic. The disordered stretch occupies residues Thr-30 to Lys-178. The segment covering Arg-53 to Asp-84 has biased composition (low complexity). The span at Ala-85 to Asp-95 shows a compositional bias: acidic residues. Basic and acidic residues predominate over residues Leu-107–Lys-178.

This sequence belongs to the DDRGK1 family. In terms of assembly, interacts with Atg9; the interaction is transient.

The protein resides in the endoplasmic reticulum membrane. In terms of biological role, substrate adapter for ufmylation, the covalent attachment of the ubiquitin-like modifier UFM1 to substrate proteins. Required for ufmylation of Atg9; protects the nervous system during aging, possibly by stabilizing Atg9 and supporting its function. The sequence is that of DDRGK domain-containing protein 1 from Drosophila persimilis (Fruit fly).